A 593-amino-acid polypeptide reads, in one-letter code: Arginine--tRNA ligase (593 aa).

A 'HIGH' region motif is present at residues 138 to 148; sequence ANPTGPLHVGH.

This sequence belongs to the class-I aminoacyl-tRNA synthetase family. Monomer.

The protein resides in the cytoplasm. It carries out the reaction tRNA(Arg) + L-arginine + ATP = L-arginyl-tRNA(Arg) + AMP + diphosphate. This is Arginine--tRNA ligase from Burkholderia ambifaria (strain ATCC BAA-244 / DSM 16087 / CCUG 44356 / LMG 19182 / AMMD) (Burkholderia cepacia (strain AMMD)).